We begin with the raw amino-acid sequence, 520 residues long: MIPDVSTALSWLEANPQALKGIRRGVEREGLRINANGSLAQTPHPESLGSALTHKWITTDFAEALLEFITPVDDDIDHMLTLLRDIHRYVARRLGDERLWPMSMPCFIDSAQPIELAQYGSSNIGRMKTLYRKGLKNRYSALMQVIAGVHYNFSLPLAFWQAYAGIRDEASGKEAISAGYLRLIRNYYRFGWIILYLFGASPGICPSFLNGRKTDLLFEQAPSGLIYLPYATSLRLSDLGYTNKSQSQLNITFNHLDEYVRGLKQAIKTPSADYQRMGLQRGGHYLQLNTNVLQIENELYAPIRPKRVTRDDESPSDALMRGGIEYVEVRSLDINPFSPVGVDEEQARFLDLFLIWCTLAEAPEMSAEELRCTRTNWNRVILEGRKPGLMLGIDCGSTEQPLTILGKSLFSDLRRVAETLDSNNGDTHYQLVCDKLVAGFDNPELTLSARFMDQLIEHGIGGLGLILANDYRQTLRDEPLQVLNEAQLDEERLRSWQRQRSLEVADHLSFDEFLASQNGR.

The protein belongs to the glutamate--cysteine ligase type 1 family. Type 1 subfamily.

The enzyme catalyses L-cysteine + L-glutamate + ATP = gamma-L-glutamyl-L-cysteine + ADP + phosphate + H(+). Its pathway is sulfur metabolism; glutathione biosynthesis; glutathione from L-cysteine and L-glutamate: step 1/2. The protein is Glutamate--cysteine ligase of Sodalis glossinidius (strain morsitans).